The sequence spans 261 residues: Indole-3-glycerol phosphate synthase (261 aa).

This sequence belongs to the TrpC family.

It carries out the reaction 1-(2-carboxyphenylamino)-1-deoxy-D-ribulose 5-phosphate + H(+) = (1S,2R)-1-C-(indol-3-yl)glycerol 3-phosphate + CO2 + H2O. It participates in amino-acid biosynthesis; L-tryptophan biosynthesis; L-tryptophan from chorismate: step 4/5. This chain is Indole-3-glycerol phosphate synthase, found in Burkholderia pseudomallei (strain 1710b).